Consider the following 406-residue polypeptide: Peptidase T (406 aa).

Residue H78 coordinates Zn(2+). D80 is a catalytic residue. A Zn(2+)-binding site is contributed by D139. E173 (proton acceptor) is an active-site residue. Zn(2+)-binding residues include E174, D196, and H378.

The protein belongs to the peptidase M20B family. Zn(2+) serves as cofactor.

It is found in the cytoplasm. It carries out the reaction Release of the N-terminal residue from a tripeptide.. Its function is as follows. Cleaves the N-terminal amino acid of tripeptides. The protein is Peptidase T of Clostridium perfringens (strain ATCC 13124 / DSM 756 / JCM 1290 / NCIMB 6125 / NCTC 8237 / Type A).